We begin with the raw amino-acid sequence, 407 residues long: Phosphopentomutase (407 aa).

Residues aspartate 10, aspartate 306, histidine 311, aspartate 347, histidine 348, and histidine 359 each contribute to the Mn(2+) site.

This sequence belongs to the phosphopentomutase family. Requires Mn(2+) as cofactor.

The protein resides in the cytoplasm. The enzyme catalyses 2-deoxy-alpha-D-ribose 1-phosphate = 2-deoxy-D-ribose 5-phosphate. It carries out the reaction alpha-D-ribose 1-phosphate = D-ribose 5-phosphate. It functions in the pathway carbohydrate degradation; 2-deoxy-D-ribose 1-phosphate degradation; D-glyceraldehyde 3-phosphate and acetaldehyde from 2-deoxy-alpha-D-ribose 1-phosphate: step 1/2. Functionally, isomerase that catalyzes the conversion of deoxy-ribose 1-phosphate (dRib-1-P) and ribose 1-phosphate (Rib-1-P) to deoxy-ribose 5-phosphate (dRib-5-P) and ribose 5-phosphate (Rib-5-P), respectively. The protein is Phosphopentomutase of Salmonella paratyphi A (strain AKU_12601).